Here is a 338-residue protein sequence, read N- to C-terminus: MIELHQVSKSFNVNGKTVEAVKNVSITVEKGEIFGVVGYSGAGKSTLVRCINLLERPDAGQVLIDGKNLSTLSSKELRVARRKIGMIFQGYNLLKTATVYDNIAKPLKLEGVPKDEIEIRVNKYLSIVGLEDKRNNYPSQLSGGQKQRVAIARALAHEPEILLSDEATSALDPETTEAILQLLLKINAELGITIFLITHELDVIQRICDRVAVMENGHLVEQGTVLDIFTKAKHATTKRFVGSEASFDIPQDLLEKYIATGKLVSLHFIGDEADEPALALVSRKFDVLPSILAGGIDHLKNGTLGKLLVHLKGDEAEYSKAIAYLKESGVVVEEVELL.

The ABC transporter domain occupies 2-241 (IELHQVSKSF…AKHATTKRFV (240 aa)). 38–45 (GYSGAGKS) provides a ligand contact to ATP.

This sequence belongs to the ABC transporter superfamily. Methionine importer (TC 3.A.1.24) family. As to quaternary structure, the complex is composed of two ATP-binding proteins (MetN), two transmembrane proteins (MetI) and a solute-binding protein (MetQ).

It localises to the cell membrane. The enzyme catalyses L-methionine(out) + ATP + H2O = L-methionine(in) + ADP + phosphate + H(+). It carries out the reaction D-methionine(out) + ATP + H2O = D-methionine(in) + ADP + phosphate + H(+). Functionally, part of the ABC transporter complex MetNIQ involved in methionine import. Responsible for energy coupling to the transport system. The chain is Methionine import ATP-binding protein MetN 1 from Listeria innocua serovar 6a (strain ATCC BAA-680 / CLIP 11262).